The primary structure comprises 165 residues: UPF0114 protein in repA1-repA2 intergenic region (165 aa).

The next 3 membrane-spanning stretches (helical) occupy residues 15 to 35 (LMFP…VKFF), 53 to 73 (LVLI…LVMV), and 136 to 156 (IMWC…MAYI).

It belongs to the UPF0114 family.

The protein localises to the cell membrane. This chain is UPF0114 protein in repA1-repA2 intergenic region, found in Buchnera aphidicola subsp. Thelaxes suberi.